We begin with the raw amino-acid sequence, 72 residues long: Translation initiation factor IF-1 1 (72 aa).

The S1-like domain maps to 1–72 (MSKDDVIQMQ…TRARIVFRSK (72 aa)).

Belongs to the IF-1 family. As to quaternary structure, component of the 30S ribosomal translation pre-initiation complex which assembles on the 30S ribosome in the order IF-2 and IF-3, IF-1 and N-formylmethionyl-tRNA(fMet); mRNA recruitment can occur at any time during PIC assembly.

It localises to the cytoplasm. In terms of biological role, one of the essential components for the initiation of protein synthesis. Stabilizes the binding of IF-2 and IF-3 on the 30S subunit to which N-formylmethionyl-tRNA(fMet) subsequently binds. Helps modulate mRNA selection, yielding the 30S pre-initiation complex (PIC). Upon addition of the 50S ribosomal subunit IF-1, IF-2 and IF-3 are released leaving the mature 70S translation initiation complex. The sequence is that of Translation initiation factor IF-1 1 from Bordetella avium (strain 197N).